A 257-amino-acid chain; its full sequence is Probable transcriptional regulatory protein SRU_2667 (257 aa).

Positions 1–15 (MAGHTRKWAKVKRKK) are enriched in basic residues. A disordered region spans residues 1–25 (MAGHTRKWAKVKRKKQKDDRRKSKV).

It belongs to the TACO1 family.

It localises to the cytoplasm. The protein is Probable transcriptional regulatory protein SRU_2667 of Salinibacter ruber (strain DSM 13855 / M31).